We begin with the raw amino-acid sequence, 416 residues long: Polyadenylation and cleavage factor homolog 1 (416 aa).

The segment covering 1-17 (MASNGSFSAQRNANART) has biased composition (polar residues). The interval 1–80 (MASNGSFSAQ…NNNNVSRVSS (80 aa)) is disordered. A compositionally biased stretch (low complexity) spans 70 to 80 (SNNNNVSRVSS). Residues 199–220 (KELTDLLSLLNNEKEKKTLEAS) are a coiled coil. A C2H2-type zinc finger spans residues 254–276 (RQCSSCGLRFKCQEEHSKHMDWH).

Forms a complex with cleavage and polyadenylation specificity factor (CPSF) subunits CLPS3, CLPS5, CPSF30, PCFS4, PCFS5, CSTF77 and FIPS3.

It localises to the nucleus. This chain is Polyadenylation and cleavage factor homolog 1, found in Arabidopsis thaliana (Mouse-ear cress).